We begin with the raw amino-acid sequence, 347 residues long: Hydroxymethylglutaryl-CoA synthase (347 aa).

(3S)-3-hydroxy-3-methylglutaryl-CoA contacts are provided by Asp-29 and Ala-30. The active-site Proton donor/acceptor is the Glu-80. Residues Cys-112 and Thr-153 each coordinate (3S)-3-hydroxy-3-methylglutaryl-CoA. The active-site Acyl-thioester intermediate is the Cys-112. Position 199 (Arg-199) interacts with CoA. (3S)-3-hydroxy-3-methylglutaryl-CoA-binding residues include Thr-201 and His-234. Catalysis depends on His-234, which acts as the Proton donor/acceptor. Lys-239 is a CoA binding site. Residues Arg-243, Asn-266, and Ser-296 each contribute to the (3S)-3-hydroxy-3-methylglutaryl-CoA site.

The protein belongs to the thiolase-like superfamily. Archaeal HMG-CoA synthase family. Interacts with acetoacetyl-CoA thiolase that catalyzes the precedent step in the pathway and with a DUF35 protein. The acetoacetyl-CoA thiolase/HMG-CoA synthase complex channels the intermediate via a fused CoA-binding site, which allows for efficient coupling of the endergonic thiolase reaction with the exergonic HMGCS reaction.

The catalysed reaction is acetoacetyl-CoA + acetyl-CoA + H2O = (3S)-3-hydroxy-3-methylglutaryl-CoA + CoA + H(+). Its pathway is metabolic intermediate biosynthesis; (R)-mevalonate biosynthesis; (R)-mevalonate from acetyl-CoA: step 2/3. Catalyzes the condensation of acetyl-CoA with acetoacetyl-CoA to form 3-hydroxy-3-methylglutaryl-CoA (HMG-CoA). Functions in the mevalonate (MVA) pathway leading to isopentenyl diphosphate (IPP), a key precursor for the biosynthesis of isoprenoid compounds that are building blocks of archaeal membrane lipids. The chain is Hydroxymethylglutaryl-CoA synthase from Methanocella arvoryzae (strain DSM 22066 / NBRC 105507 / MRE50).